Reading from the N-terminus, the 485-residue chain is Acyltransferase cm3D (485 aa).

His-169 acts as the Proton acceptor in catalysis.

This sequence belongs to the plant acyltransferase family. As to quaternary structure, monomer.

The protein operates within secondary metabolite biosynthesis. In terms of biological role, acyltransferase; part of the gene cluster that mediates the biosynthesis of beauveriolides I and III, cyclodepsipeptides acting as inhibitors of the acyl-CoA:cholesterol acyltransferase. The HR-PKS cm3B initiates the biosynthesis of beauveriolides by iteratively catalyzing the formation of the linear polyketide chain. The ATP-dependent acetyl-CoA ligase cm3D converts the polyketide carboxylic acid to a CoA thioester which id shuttled to the first T domain in the NRPS cm3A by the acetyltransferase cm3C. Cm3A contains 13 domains and assembles the polyketide chain, L-phenylalanine, L-alanine, and D-leucine (or D-allo-isoleucine) to form beauveriolide I (or beauveriolide III). The production of both beauveriolides I and III suggests the substrate adaptability of cm3B, using different amino acids as substrates. This is Acyltransferase cm3D from Cordyceps militaris (strain CM01) (Caterpillar fungus).